The sequence spans 452 residues: Pup--protein ligase (452 aa).

Glutamate 9 provides a ligand contact to Mg(2+). Arginine 53 lines the ATP pocket. Tyrosine 55 is a binding site for Mg(2+). Catalysis depends on aspartate 57, which acts as the Proton acceptor. Mg(2+) is bound at residue glutamate 63. ATP is bound by residues threonine 66 and tryptophan 419.

The protein belongs to the Pup ligase/Pup deamidase family. Pup-conjugating enzyme subfamily.

The catalysed reaction is ATP + [prokaryotic ubiquitin-like protein]-L-glutamate + [protein]-L-lysine = ADP + phosphate + N(6)-([prokaryotic ubiquitin-like protein]-gamma-L-glutamyl)-[protein]-L-lysine.. It participates in protein degradation; proteasomal Pup-dependent pathway. It functions in the pathway protein modification; protein pupylation. Its function is as follows. Catalyzes the covalent attachment of the prokaryotic ubiquitin-like protein modifier Pup to the proteasomal substrate proteins, thereby targeting them for proteasomal degradation. This tagging system is termed pupylation. The ligation reaction involves the side-chain carboxylate of the C-terminal glutamate of Pup and the side-chain amino group of a substrate lysine. This chain is Pup--protein ligase, found in Mycobacterium sp. (strain JLS).